The chain runs to 122 residues: Large ribosomal subunit protein uL18 (122 aa).

The protein belongs to the universal ribosomal protein uL18 family. As to quaternary structure, part of the 50S ribosomal subunit; part of the 5S rRNA/L5/L18/L25 subcomplex. Contacts the 5S and 23S rRNAs.

This is one of the proteins that bind and probably mediate the attachment of the 5S RNA into the large ribosomal subunit, where it forms part of the central protuberance. The sequence is that of Large ribosomal subunit protein uL18 from Prochlorococcus marinus (strain AS9601).